The chain runs to 732 residues: Aldehyde oxidoreductase molybdenum-binding subunit PaoC (732 aa).

Mo-molybdopterin cytosine dinucleotide-binding positions include 241–242 (GF), 468–470 (IGT), 511–512 (GA), 615–621 (RILNPKT), Q625, and 688–691 (KGVG). E692 acts as the Proton acceptor in catalysis.

Belongs to the xanthine dehydrogenase family. Heterotrimer composed of PaoA, PaoB and PaoC. Mo-molybdopterin cytosine dinucleotide is required as a cofactor.

The protein resides in the periplasm. The catalysed reaction is an aldehyde + A + H2O = a carboxylate + AH2 + H(+). With respect to regulation, the complex requires PaoD for activity. In terms of biological role, oxidizes aldehydes to the corresponding carboxylic acids with a preference for aromatic aldehydes. It might play a role in the detoxification of aldehydes to avoid cell damage. The polypeptide is Aldehyde oxidoreductase molybdenum-binding subunit PaoC (Escherichia coli (strain K12)).